Consider the following 143-residue polypeptide: Transcriptional regulator MraZ (143 aa).

SpoVT-AbrB domains lie at 5–47 and 76–119; these read TYEP…SAEE and ASDE…DAAA.

This sequence belongs to the MraZ family. Forms oligomers.

The protein localises to the cytoplasm. It is found in the nucleoid. The chain is Transcriptional regulator MraZ from Kocuria rhizophila (strain ATCC 9341 / DSM 348 / NBRC 103217 / DC2201).